The chain runs to 235 residues: Protein mxl-3 (235 aa).

The segment at 18 to 49 (EKQFRKRHHSDSSDDDSSSPKSASPSMDDDRR) is disordered. Positions 47–60 (DRRAHHNELERRRR) are basic motif. Positions 47 to 98 (DRRAHHNELERRRRDHIKDHFTILKDAIPLLDGEKSSRALILKRAVEFIHVM) constitute a bHLH domain. A helix-loop-helix motif region spans residues 61–98 (DHIKDHFTILKDAIPLLDGEKSSRALILKRAVEFIHVM).

Belongs to the MAX family. In terms of assembly, may form homodimer. Interacts (via N-terminus) with skn-1 isoforms a and c. In terms of tissue distribution, expressed in the intestine and in the AWC sensory neurons.

Its subcellular location is the nucleus. The protein resides in the cytoplasm. Transcription factor which regulates the expression of genes involved in lipid metabolism in response to nutrient availability. Binds to the E-box motif 5'-CACGTG-3'. Under well-fed conditions, binds to the promoter and represses the expression of lipase genes lipl-1, lipl-2, lipl-3 and to a lesser extent lipl-5, thereby preventing lipolysis. In response to a high-glucose diet, promotes fatty acid synthesis, elongation and desaturation by up-regulating transcription factor sbp-1 expression. Under well-fed conditions, acts remotely in the intestine to up-regulate the expression of chemoreceptor srh-234 gene in the ADL sensory neuron, possibly by regulating the insulin signaling pathway. The chain is Protein mxl-3 from Caenorhabditis elegans.